The sequence spans 142 residues: Ribosome maturation factor RimP (142 aa).

This sequence belongs to the RimP family.

It localises to the cytoplasm. Functionally, required for maturation of 30S ribosomal subunits. This is Ribosome maturation factor RimP from Nitrosospira multiformis (strain ATCC 25196 / NCIMB 11849 / C 71).